An 85-amino-acid chain; its full sequence is COMM domain-containing protein 6 (85 aa).

Methionine 1 is modified (N-acetylmethionine). The COMM domain maps to 18–85; sequence QLVDFQWKLG…KEIAAVIETV (68 aa).

Belongs to the COMM domain-containing protein 6 family. As to quaternary structure, component of the commander complex consisting of the CCC subcomplex and the retriever subcomplex. Component of the CCC (COMMD/CCDC22/CCDC93) subcomplex consisting of COMMD1, COMMD2, COMMD3, COMMD4, COMMD5, COMMD6, COMMD7, COMMD8, COMMD9, COMMD10, CCDC22 and CCDC93; within the complex forms a heterodimer with COMMD1. May form a homodimer with isoform 1. Interacts with RELA, RELB, NFKB1/p105. Does not interact with NFKBIB. Interacts with CCDC22, CCDC93, SCNN1B, CUL4A. In terms of tissue distribution, ubiquitous. Expressed in brain, heart, skeletal muscle, lung, pancreas, liver, kidney, small intestine and placenta.

It localises to the nucleus. Its subcellular location is the cytoplasm. Scaffold protein in the commander complex that is essential for endosomal recycling of transmembrane cargos; the commander complex is composed of the CCC subcomplex and the retriever subcomplex. May modulate activity of cullin-RING E3 ubiquitin ligase (CRL) complexes. Down-regulates activation of NF-kappa-B. Inhibits TNF-induced NFKB1 activation. The polypeptide is COMM domain-containing protein 6 (COMMD6) (Homo sapiens (Human)).